The sequence spans 606 residues: Zinc finger protein 214 (606 aa).

A KRAB domain is found at 3 to 83 (VTFEDVTIIF…GAQMYENQNY (81 aa)). The C2H2-type 1; degenerate zinc finger occupies 275-297 (YGCDEVDGNFHQSSGVHFHQRVH). Residues 303-325 (YSCNACGKSFSQISSLHNHQRVH) form a C2H2-type 2 zinc finger. Residues 330–352 (FYKIECDKDLSRNSLLHIHQRLH) form a C2H2-type 3; degenerate zinc finger. 8 C2H2-type zinc fingers span residues 358-380 (FKCN…QRVH), 386-408 (YKCD…QLVH), 414-436 (YKCE…QRVH), 442-464 (YKCD…QRVH), 470-492 (YTCP…QRVH), 498-520 (YKCE…QRVH), 526-548 (YKCH…QRVH), and 554-576 (YQCA…QRVH).

The protein belongs to the krueppel C2H2-type zinc-finger protein family.

The protein localises to the nucleus. May be involved in transcriptional regulation. In Homo sapiens (Human), this protein is Zinc finger protein 214 (ZNF214).